The primary structure comprises 207 residues: Thymidylate kinase (207 aa).

9–16 (GGEGCGKS) contributes to the ATP binding site.

This sequence belongs to the thymidylate kinase family.

It catalyses the reaction dTMP + ATP = dTDP + ADP. Its function is as follows. Phosphorylation of dTMP to form dTDP in both de novo and salvage pathways of dTTP synthesis. The protein is Thymidylate kinase of Dehalococcoides mccartyi (strain ATCC BAA-2266 / KCTC 15142 / 195) (Dehalococcoides ethenogenes (strain 195)).